The sequence spans 2408 residues: Protein ELYS (2408 aa).

Residues 1–492 are seven-bladed beta propeller repeats; sequence MQNLEAQVTG…SGLIHFACTG (492 aa). The disordered stretch occupies residues 1016-2408; sequence YSLPSLVWRE…AKPVTRRKMR (1393 aa). Positions 1124–1145 are enriched in polar residues; it reads PLTSSDTDNNQTPHKSPLLKTS. Residues 1457–1466 show a composition bias toward acidic residues; that stretch reads NDQDSEEIEE. 2 stretches are compositionally biased toward polar residues: residues 1705-1719 and 1735-1750; these read INEG…QSTL and PADS…TLPT. Residues 2136–2149 are compositionally biased toward basic and acidic residues; it reads QASKIQEDLSDTPR. Sufficient for chromatin-binding regions lie at residues 2281 to 2359 and 2359 to 2408; these read STQY…PVEI and IKLI…RKMR. Residues 2281–2408 are sufficient to block nuclear pore assembly; it reads STQYVFSPPS…AKPVTRRKMR (128 aa). Residues 2329–2341 constitute a DNA-binding region (a.T hook); sequence SKPRGRPPKHKAK. The span at 2331–2348 shows a compositional bias: basic residues; sequence PRGRPPKHKAKAVTRVLK. Positions 2378 to 2389 are enriched in basic and acidic residues; it reads DSTEAKGAEKIS.

This sequence belongs to the ELYS family. As to quaternary structure, interacts with the Nup107-160 subcomplex of the NPC.

The protein resides in the nucleus. It is found in the nuclear pore complex. Its subcellular location is the cytoplasm. It localises to the nucleoplasm. Its function is as follows. Required for the assembly of a functional nuclear pore complex (NPC) on the surface of chromosomes as nuclei form at the end of mitosis. May initiate NPC assembly by binding to chromatin and recruiting the Nup107-160 subcomplex, which may in turn recruit membrane vesicles containing pom121 and tmem48/ndc1. Association with chromatin may require the presence of the mcm2-mcm7 complex, suggesting a mechanism for coordination of nuclear assembly and the inactivation of replication licensing. The polypeptide is Protein ELYS (ahctf1) (Xenopus laevis (African clawed frog)).